A 142-amino-acid chain; its full sequence is Transcriptional regulator MraZ (142 aa).

2 consecutive SpoVT-AbrB domains span residues 5-47 (EYQH…PLDE) and 76-119 (ACEV…SKEK).

The protein belongs to the MraZ family. As to quaternary structure, forms oligomers.

It is found in the cytoplasm. The protein resides in the nucleoid. The sequence is that of Transcriptional regulator MraZ from Clostridium beijerinckii (strain ATCC 51743 / NCIMB 8052) (Clostridium acetobutylicum).